The chain runs to 321 residues: Probable arabinan endo-1,5-alpha-L-arabinosidase C (321 aa).

The first 20 residues, 1–20 (MYLYTLILLFLASVNVNAYA), serve as a signal peptide directing secretion. Asp33 (proton acceptor) is an active-site residue. Asn75 and Asn192 each carry an N-linked (GlcNAc...) asparagine glycan. Glu200 serves as the catalytic Proton donor. Asn224 carries N-linked (GlcNAc...) asparagine glycosylation.

Belongs to the glycosyl hydrolase 43 family.

It is found in the secreted. It catalyses the reaction Endohydrolysis of (1-&gt;5)-alpha-arabinofuranosidic linkages in (1-&gt;5)-arabinans.. Its pathway is glycan metabolism; L-arabinan degradation. Functionally, endo-1,5-alpha-L-arabinanase involved in degradation of pectin. Its preferred substrate is linear 1,5-alpha-L-arabinan. This chain is Probable arabinan endo-1,5-alpha-L-arabinosidase C (abnC), found in Neosartorya fischeri (strain ATCC 1020 / DSM 3700 / CBS 544.65 / FGSC A1164 / JCM 1740 / NRRL 181 / WB 181) (Aspergillus fischerianus).